The following is a 1323-amino-acid chain: Glutamate receptor ionotropic, NMDA 2D (1323 aa).

An N-terminal signal peptide occupies residues 1-27 (MRGAGGPRGPRGPAKMLLLLALACASP). The Extracellular portion of the chain corresponds to 28–579 (FPEEVPGPGA…SPSAFLEPYS (552 aa)). N-linked (GlcNAc...) asparagine glycosylation is present at Asn89. A disulfide bridge connects residues Cys101 and Cys345. Asn349, Asn363, Asn381, and Asn464 each carry an N-linked (GlcNAc...) asparagine glycan. Intrachain disulfides connect Cys452–Cys480 and Cys459–Cys481. Residues Ser536, Thr538, and Arg543 each contribute to the L-glutamate site. N-linked (GlcNAc...) asparagine glycosylation occurs at Asn566. Residues 580–601 (PAVWVMMFVMCLTVVAVTVFIF) form a helical membrane-spanning segment. Topologically, residues 602–626 (EYLSPVGYNRSLATGKRPGGSTFTI) are cytoplasmic. Positions 627–638 (GKSIWLLWALVF) form an intramembrane region, discontinuously helical. A pore-forming region spans residues 628–647 (KSIWLLWALVFNNSVPVENP). The Cytoplasmic portion of the chain corresponds to 639–650 (NNSVPVENPRGT). Residues 651 to 671 (TSKIMVLVWAFFAVIFLASYT) traverse the membrane as a helical segment. At 672–840 (ANLAAFMIQE…EVMSSKLDID (169 aa)) the chain is on the extracellular side. The N-linked (GlcNAc...) asparagine glycan is linked to Asn712. 3 residues coordinate L-glutamate: Ser714, Thr715, and Asp756. A disulfide bond links Cys770 and Cys825. A helical transmembrane segment spans residues 841–864 (NMAGVFYMLLVAMGLSLLVFAWEH). Residues 865–1323 (LVYWRLRHCL…AHFSSLESEV (459 aa)) are Cytoplasmic-facing. 3 disordered regions span residues 897–952 (EAAP…PGGA), 977–1112 (AAPR…SLGG), and 1201–1323 (PWAA…ESEV). Positions 899 to 929 (APPPAKPPPPPQPLPSPAYPAARPPPGPAPF) are enriched in pro residues. A compositionally biased stretch (basic and acidic residues) spans 931 to 940 (PRERAAADRW). A compositionally biased stretch (low complexity) spans 977 to 986 (AAPRGAAGRP). The span at 987–1001 (LSPPTTQPPQKPPPS) shows a compositional bias: pro residues. Positions 1030 to 1039 (AAAAAAVGPP) are enriched in low complexity. Over residues 1080-1092 (TAPPPRRAAPPPC) the composition is skewed to pro residues. A compositionally biased stretch (basic residues) spans 1208–1228 (PRRRARCGCPRPHPHRPRASH). Arg1303 carries the post-translational modification Omega-N-methylarginine. Position 1313 is a phosphoserine (Ser1313). Positions 1321 to 1323 (SEV) match the PDZ-binding motif.

Belongs to the glutamate-gated ion channel (TC 1.A.10.1) family. NR2D/GRIN2D subfamily. Heterotetramer. Forms heterotetrameric channels composed of two GluN1/zeta subunits (GRIN1), and two identical GluN2/epsilon subunits (GRIN2A, GRIN2B, GRIN2C or GRIN2D) or GluN3 subunits (GRIN3A or GRIN3B) (in vitro). In vivo, the subunit composition may depend on the expression levels of the different subunits. Interacts with PDZ domains of PATJ and DLG4. As to expression, detected in neonate brain synaptosomes (at protein level).

The protein localises to the cell membrane. The protein resides in the postsynaptic cell membrane. The catalysed reaction is Ca(2+)(in) = Ca(2+)(out). It carries out the reaction Na(+)(in) = Na(+)(out). The enzyme catalyses K(+)(in) = K(+)(out). Functionally, component of N-methyl-D-aspartate (NMDA) receptors (NMDARs) that function as heterotetrameric, ligand-gated cation channels with high calcium permeability and voltage-dependent block by Mg(2+). Participates in synaptic plasticity for learning and memory formation. Channel activation requires binding of the neurotransmitter L-glutamate to the GluN2 subunit, glycine or D-serine binding to the GluN1 subunit, plus membrane depolarization to eliminate channel inhibition by Mg(2+). NMDARs mediate simultaneously the potasium efflux and the influx of calcium and sodium. Each GluN2 subunit confers differential attributes to channel properties, including activation, deactivation and desensitization kinetics, pH sensitivity, Ca2(+) permeability, and binding to allosteric modulators. The sequence is that of Glutamate receptor ionotropic, NMDA 2D from Mus musculus (Mouse).